The sequence spans 175 residues: Disulfide bond formation protein B 2 (175 aa).

Over 1–9 (MYLARTRFL) the chain is Cytoplasmic. The helical transmembrane segment at 10–26 (FFLASLACASIIGVAFY) threads the bilayer. Topologically, residues 27–44 (LQQAVGLDPCTLCMVQRA) are periplasmic. The cysteines at positions 36 and 39 are disulfide-linked. A helical transmembrane segment spans residues 45 to 61 (AFIACGVLALCAACHAP). At 62–68 (GPTGTRR) the chain is on the cytoplasmic side. The chain crosses the membrane as a helical span at residues 69 to 85 (YSLGLLLVALAGLAGAG). Topologically, residues 86-142 (TQVWLQTASADQLIPFITRLEQILSLLSLDMCIDRLRSDALFCAEITWTLFGISLPE) are periplasmic. A helical transmembrane segment spans residues 143–161 (WSLLAFTGLALLPLYPLFS). The Cytoplasmic portion of the chain corresponds to 162–175 (ELSHWLATRDRGGY).

Belongs to the DsbB family.

The protein localises to the cell inner membrane. In terms of biological role, required for disulfide bond formation in some periplasmic proteins. Acts by oxidizing the DsbA protein. The protein is Disulfide bond formation protein B 2 of Pseudomonas syringae pv. syringae (strain B728a).